Consider the following 197-residue polypeptide: dITP/XTP pyrophosphatase (197 aa).

Residue 8-13 (TGNAGK) coordinates substrate. 2 residues coordinate Mg(2+): E40 and D69. The active-site Proton acceptor is D69. Substrate-binding positions include S70, 154 to 157 (FGYD), K177, and 182 to 183 (HR).

It belongs to the HAM1 NTPase family. As to quaternary structure, homodimer. Requires Mg(2+) as cofactor.

It catalyses the reaction XTP + H2O = XMP + diphosphate + H(+). The catalysed reaction is dITP + H2O = dIMP + diphosphate + H(+). It carries out the reaction ITP + H2O = IMP + diphosphate + H(+). Pyrophosphatase that catalyzes the hydrolysis of nucleoside triphosphates to their monophosphate derivatives, with a high preference for the non-canonical purine nucleotides XTP (xanthosine triphosphate), dITP (deoxyinosine triphosphate) and ITP. Seems to function as a house-cleaning enzyme that removes non-canonical purine nucleotides from the nucleotide pool, thus preventing their incorporation into DNA/RNA and avoiding chromosomal lesions. The chain is dITP/XTP pyrophosphatase (rdgB) from Salmonella paratyphi A (strain ATCC 9150 / SARB42).